Consider the following 140-residue polypeptide: Protein BIC1 (140 aa).

Residues 1-10 show a composition bias toward polar residues; that stretch reads MMNIDDTTSP. A disordered region spans residues 1 to 71; sequence MMNIDDTTSP…RVDTGRERLK (71 aa). A compositionally biased stretch (basic and acidic residues) spans 42–68; that stretch reads ADKKDLALLEEKPKQSQEEDRVDTGRE.

As to quaternary structure, interacts with CRY2 in both darkness and light.

It localises to the nucleus. In terms of biological role, regulates the blue-light dependent dimerization of CRY2 and formation of photobodies. Interacts with photoexited CRY2 to inhibit its activity. Inhibits CRY phosphorylation. The protein is Protein BIC1 of Arabidopsis thaliana (Mouse-ear cress).